A 342-amino-acid chain; its full sequence is Methylthioribose-1-phosphate isomerase (342 aa).

Substrate contacts are provided by residues 49–51, Arg-86, and Gln-187; that span reads RGA. Asp-228 functions as the Proton donor in the catalytic mechanism. Residue 238 to 239 coordinates substrate; that stretch reads NK.

The protein belongs to the eIF-2B alpha/beta/delta subunits family. MtnA subfamily.

It carries out the reaction 5-(methylsulfanyl)-alpha-D-ribose 1-phosphate = 5-(methylsulfanyl)-D-ribulose 1-phosphate. The protein operates within amino-acid biosynthesis; L-methionine biosynthesis via salvage pathway; L-methionine from S-methyl-5-thio-alpha-D-ribose 1-phosphate: step 1/6. Its function is as follows. Catalyzes the interconversion of methylthioribose-1-phosphate (MTR-1-P) into methylthioribulose-1-phosphate (MTRu-1-P). The polypeptide is Methylthioribose-1-phosphate isomerase (Klebsiella pneumoniae (strain 342)).